The chain runs to 710 residues: Polyribonucleotide nucleotidyltransferase (710 aa).

The Mg(2+) site is built by Asp-487 and Asp-493. Positions 554 to 613 constitute a KH domain; the sequence is PKIITMTINPDKIRDVIGPSGKQINKIIEETGVKIDIEQDGTVFISSIDQQMNEKAKKII. The 69-residue stretch at 623–691 folds into the S1 motif domain; sequence GEIYLGKVKR…KQGRVNLSRK (69 aa).

This sequence belongs to the polyribonucleotide nucleotidyltransferase family. Requires Mg(2+) as cofactor.

The protein resides in the cytoplasm. It carries out the reaction RNA(n+1) + phosphate = RNA(n) + a ribonucleoside 5'-diphosphate. Involved in mRNA degradation. Catalyzes the phosphorolysis of single-stranded polyribonucleotides processively in the 3'- to 5'-direction. The sequence is that of Polyribonucleotide nucleotidyltransferase from Bacillus cytotoxicus (strain DSM 22905 / CIP 110041 / 391-98 / NVH 391-98).